Reading from the N-terminus, the 216-residue chain is uncharacterized protein (216 aa).

An N-acetyltransferase domain is found at 1–216 (MVVKIVEAYE…DVTFLKLKLK (216 aa)).

This sequence belongs to the acetyltransferase family.

This is an uncharacterized protein from Dictyostelium discoideum (Social amoeba).